Consider the following 695-residue polypeptide: Lysophospholipase 2 (695 aa).

The N-terminal stretch at 1–19 (MQLSVLIASVLAAGAAVDA) is a signal peptide. N-linked (GlcNAc...) asparagine glycans are attached at residues N26, N72, N83, N115, N152, N171, N207, N269, N335, N379, N480, N504, N513, N532, N556, N573, N620, N626, N644, and N648. A PLA2c domain is found at 28–577 (SCPDNANFIR…TNYCWNGTID (550 aa)). The tract at residues 612-662 (NTGSGTKSNSSSKTNSTLVTSSRATSTGTLISNSSSNSTVSSTAARSSTSS) is disordered.

The protein belongs to the lysophospholipase family.

Its subcellular location is the secreted. It is found in the cell wall. It carries out the reaction a 1-acyl-sn-glycero-3-phosphocholine + H2O = sn-glycerol 3-phosphocholine + a fatty acid + H(+). In terms of biological role, catalyzes the release of fatty acids from lysophospholipids. Phospholipase B may well contribute to pathogenicity by abetting the fungus in damaging and traversing host cell membranes, processes which likely increase the rapidity of disseminated infection. In Candida glabrata (strain ATCC 2001 / BCRC 20586 / JCM 3761 / NBRC 0622 / NRRL Y-65 / CBS 138) (Yeast), this protein is Lysophospholipase 2.